The sequence spans 87 residues: Small ribosomal subunit protein bS20 (87 aa).

The segment at 1–27 is disordered; that stretch reads MANIKSAKKRAVTSEKRRKHNASRRSM.

This sequence belongs to the bacterial ribosomal protein bS20 family.

In terms of biological role, binds directly to 16S ribosomal RNA. In Erwinia tasmaniensis (strain DSM 17950 / CFBP 7177 / CIP 109463 / NCPPB 4357 / Et1/99), this protein is Small ribosomal subunit protein bS20.